The following is a 721-amino-acid chain: Long-chain-fatty-acid--CoA ligase ACSBG1 (721 aa).

The segment at 1-64 (MPRGSEAGYC…SHGLELSAPE (64 aa)) is disordered. Residues 26-52 (QQGASLGTSQDNSQTSSLIDGQTLSKE) are compositionally biased toward polar residues. Phosphoserine occurs at positions 34, 50, 53, and 70. ATP-binding positions include 279–287 (TSGTTGNPK), 469–474 (AGYGLS), aspartate 547, and arginine 562. Tyrosine 655 is modified (phosphotyrosine). Residue lysine 698 participates in ATP binding.

Belongs to the ATP-dependent AMP-binding enzyme family. Bubblegum subfamily. In terms of tissue distribution, mainly expressed in brain. Also expressed in adrenal gland and testis. In brain, it is present in cerebral cortical and cerebellar neurons and in steroidogenic cells of the adrenal gland, testis and ovary (at protein level).

The protein localises to the cytoplasm. The protein resides in the cytoplasmic vesicle. It is found in the microsome. Its subcellular location is the endoplasmic reticulum. It localises to the cell membrane. The catalysed reaction is a long-chain fatty acid + ATP + CoA = a long-chain fatty acyl-CoA + AMP + diphosphate. The enzyme catalyses (E)-hexadec-2-enoate + ATP + CoA = (2E)-hexadecenoyl-CoA + AMP + diphosphate. It catalyses the reaction hexadecanoate + ATP + CoA = hexadecanoyl-CoA + AMP + diphosphate. Its function is as follows. Catalyzes the conversion of fatty acids such as long-chain and very long-chain fatty acids to their active form acyl-CoAs for both synthesis of cellular lipids, and degradation via beta-oxidation. Can activate diverse saturated, monosaturated and polyunsaturated fatty acids. This is Long-chain-fatty-acid--CoA ligase ACSBG1 from Mus musculus (Mouse).